Here is a 732-residue protein sequence, read N- to C-terminus: MSYHPGHGHRQEPRKGAGARRGFARPDDSADAPRTGPLIFEERSTENAGAAPPIEEQLKVHNNPYASLNIQQQRIRLPIFKNRGHILYMCERYRTIIIVGETGCGKSTQVPQFLLEAGWAADGRQIVITQPRRVAVVTLATRVAEEKDCILGHDVGYTVRFDDVSDKDTKVKFMTDGLLLREILADPLLSKYSIIMIDEAHERSCNTDILLGLLRKIIQIRNDLRIIVSSATLDAELFKDFFEMNETGNSDKDTAGIISVEGRTHPVAVHHTKTSVPDYCQSAVDTVINIHKHENPGDILVFLTGQDEVEDVCEKLRELAGNLKNCDRLWVVPCYGALPAREQMKAFDSTPHGTRKVVVATNIAEASITIPGICYVIDTGYVKLRAQHAANGVETLMRVTVSKASAEQRAGRAGRIRPGKCYRLYPESEFERFAEGTVPEIQRCQMASTILQLKALGVQNVHRFHYLSPPPSWAMINGLELLYALGAIDETSQLTSPLGLQMAEFPLPPMHSKCLLKSAEFGCSTEMVTIVAMMQIQDVFITPYRQRHQADVIRKKFAVEEGDHMTMLNVFTKFVENGRSKKWCSDHFVNYRGLMRADNVRSQLVRLLKRFEIEKVSSRGLINCSENIRQCLVTGFFSQAAQYHYTGKYMTVKESFPFNMYKGSSIMFKKDYPKWVIFTEVMQDSIRDVTVIEPEWLYELAPHYYEFGTEGELAEKRMRGPAATSAAADDDY.

The tract at residues 1-50 (MSYHPGHGHRQEPRKGAGARRGFARPDDSADAPRTGPLIFEERSTENAGA) is disordered. Residues 87–251 (LYMCERYRTI…FEMNETGNSD (165 aa)) form the Helicase ATP-binding domain. 100-107 (GETGCGKS) provides a ligand contact to ATP. The DEAH box signature appears at 198–201 (DEAH). Positions 283–457 (AVDTVINIHK…STILQLKALG (175 aa)) constitute a Helicase C-terminal domain.

Belongs to the DEAD box helicase family. DEAH subfamily.

It catalyses the reaction ATP + H2O = ADP + phosphate + H(+). The polypeptide is Probable ATP-dependent RNA helicase DHX35 homolog (Caenorhabditis elegans).